The primary structure comprises 374 residues: Flagellar P-ring protein 1 (374 aa).

Positions 1 to 29 are cleaved as a signal peptide; it reads MPGVRWVRIVGVACAALSALALSVTSASA.

Belongs to the FlgI family. The basal body constitutes a major portion of the flagellar organelle and consists of four rings (L,P,S, and M) mounted on a central rod.

Its subcellular location is the periplasm. The protein resides in the bacterial flagellum basal body. Assembles around the rod to form the L-ring and probably protects the motor/basal body from shearing forces during rotation. The polypeptide is Flagellar P-ring protein 1 (Bradyrhizobium diazoefficiens (strain JCM 10833 / BCRC 13528 / IAM 13628 / NBRC 14792 / USDA 110)).